A 499-amino-acid polypeptide reads, in one-letter code: Cobyric acid synthase (499 aa).

Residues 266 to 449 (RLEIAVVRLP…LHGLFDNHLW (184 aa)) form the GATase cobBQ-type domain. Residue C344 is the Nucleophile of the active site. The active site involves H441.

Belongs to the CobB/CobQ family. CobQ subfamily.

It participates in cofactor biosynthesis; adenosylcobalamin biosynthesis. In terms of biological role, catalyzes amidations at positions B, D, E, and G on adenosylcobyrinic A,C-diamide. NH(2) groups are provided by glutamine, and one molecule of ATP is hydrogenolyzed for each amidation. The chain is Cobyric acid synthase from Synechococcus sp. (strain JA-2-3B'a(2-13)) (Cyanobacteria bacterium Yellowstone B-Prime).